Reading from the N-terminus, the 114-residue chain is Kita-kyushu lung cancer antigen 1 homolog (114 aa).

Residues 1–4 are Cytoplasmic-facing; sequence MNVY. The helical; Signal-anchor for type II membrane protein transmembrane segment at 5-22 threads the bilayer; the sequence is LLLASGILCALMTVFWKY. The Extracellular segment spans residues 23–114; sequence RRFQRNTGEM…RSASAHRKST (92 aa). N-linked (GlcNAc...) asparagine glycosylation occurs at Asn84.

It is found in the cell membrane. The chain is Kita-kyushu lung cancer antigen 1 homolog (CT83) from Macaca fascicularis (Crab-eating macaque).